Reading from the N-terminus, the 3955-residue chain is Nonribosomal peptide synthetase fmqA (3955 aa).

An adenylation 1 region spans residues 293-691 (SYSELETLSL…AQACCTIRNV (399 aa)). The region spanning 806–879 (THKETLIHQL…DLARLTDVVN (74 aa)) is the Carrier 1 domain. Serine 840 carries the O-(pantetheine 4'-phosphoryl)serine modification. The tract at residues 916–1187 (QDIYPCTPLQ…IATVPLRVRL (272 aa)) is condensation 1. The adenylation 2 stretch occupies residues 1371–1766 (TYAELGELSD…DEVEKHVYQC (396 aa)). In terms of domain architecture, Carrier 2 spans 1880-1956 (EPTSVAEREM…KIMSHESSLS (77 aa)). Serine 1917 carries the O-(pantetheine 4'-phosphoryl)serine modification. The tract at residues 1970 to 2261 (FALSPIQQMF…FTTMWPVVAE (292 aa)) is epimerase. The segment at 2438–2724 (EDIYPCSPSQ…FNPLPCRVHL (287 aa)) is condensation 2. The segment at 2906–3299 (TYGQLDELSS…GEVEANVQHC (394 aa)) is adenylation 3. Positions 3422 to 3498 (APSTEEEKKL…DLAKVAVPKS (77 aa)) constitute a Carrier 3 domain. Serine 3459 carries the O-(pantetheine 4'-phosphoryl)serine modification. The condensation 3 stretch occupies residues 3541–3805 (PGTQAQQFFI…CLNFIPLRVM (265 aa)).

The protein belongs to the NRP synthetase family. Interacts with the mitogen-activated protein kinase mpkA.

The protein resides in the cytoplasmic vesicle. It functions in the pathway alkaloid biosynthesis. Its function is as follows. Nonribosomal peptide synthetase; part of the gene cluster that mediates the biosynthesis of the antitumor fumiquinazolines that confer a dual-usage capability to defend against phagocytes in the environment and animal hosts. The simplest member is fumiquinazoline F (FQF) with a 6-6-6 tricyclic core derived from anthranilic acid (Ant), tryptophan (Trp), and alanine (Ala). The trimodular NRPS fmqA is responsible for FQF formation. Modules 1, 2 and 3 of fmqA are predicted to activate and load Ant, Trp and Ala, respectively, providing for the assembly of an Ant-Trp-Ala-S-enzyme intermediate that would undergo double cyclization for chain release and generation of the tricyclic 6-6-6 product fumiquinazoline F. The presence of an E domain predicted for module 2 of fmqA is consistent with epimerization of L-Trp to D-Trp during assembly to generate the R-stereocenter at C14 of FQF. The FAD-dependent monooxygenase fmqB and the monomodular NRPS fmqC then maturate FQF to FQA. FmqB oxidizes the 2',3'-double bond of the indole side chain of FQF, and fmqC activates L-Ala as the adenylate, installs it as the pantetheinyl thioester on its carrier protein domain, and acylates the oxidized indole for subsequent intramolecular cyclization to create the 6-5-5-imidazolindolone of FQA. The FAD-linked oxidoreductase fmqD introduces a third layer of scaffold complexity by converting FQA to the spirohemiaminal FQC, presumably by catalyzing the formation of a transient imine within the pyrazinone ring. FQC subsequently converts nonenzymatically to the known cyclic aminal FQD. In Aspergillus fumigatus (strain ATCC MYA-4609 / CBS 101355 / FGSC A1100 / Af293) (Neosartorya fumigata), this protein is Nonribosomal peptide synthetase fmqA.